The following is a 626-amino-acid chain: Beta-galactosidase large subunit (626 aa).

Catalysis depends on E466, which acts as the Proton donor. The active-site Nucleophile is the E534.

The protein belongs to the glycosyl hydrolase 2 family. In terms of assembly, heterodimer of a large (LacL) and a small subunit (LacM).

The enzyme catalyses Hydrolysis of terminal non-reducing beta-D-galactose residues in beta-D-galactosides.. Its function is as follows. Component of a beta-galactosidase that displays activity with the artificial chromogenic substrate o-nitrophenyl-beta-D-galactopyranoside (ONPG). This chain is Beta-galactosidase large subunit, found in Leuconostoc lactis.